A 159-amino-acid polypeptide reads, in one-letter code: bZIP transcription factor 11 (159 aa).

The span at 1–21 shows a compositional bias: low complexity; sequence MESSSSGTTSSTIQTSSGSEE. The interval 1–47 is disordered; sequence MESSSSGTTSSTIQTSSGSEESLMEQRKRKRMLSNRESARRSRMKKQ. A bZIP domain is found at 25–88; the sequence is EQRKRKRMLS…LTVEAENSVL (64 aa). The interval 27–48 is basic motif; that stretch reads RKRKRMLSNRESARRSRMKKQK. The interval 53 to 67 is leucine-zipper; sequence LTAQVNHLKKENTEI.

Forms heterodimers with BZIP1, BZIP9, BZIP10, BZIP25 and BZIP63. Interacts with ADA2B. Highly expressed in stems and flowers. Expressed in root tips, cotyledons, leaf vasculature, embryos, apical parts of siliques and funiculi.

The protein resides in the nucleus. Transcription factor that binds to the DNA sequence 5'-ACTCAT-3' in target gene promoters. Promotes POX1/PRODH1 expression in response to hypoosmolarity stress. Positively regulates the expression of ASN1 and POX2/PRODH2 genes, which are involved in amino acid metabolism. Regulates several metabolic pathways such as myo-inositol, raffinose and trehalose. Regulates several trehalose metabolism genes, including TRE1, TPP5 and TPP6. Mediates recruitment of the histone acetylation machinery to activate auxin-induced transcription. Interacts with ADA2B adapter protein to promote ADA2B-mediated recruitment of SAGA-like histone acetyltransferase complexes to specific auxin-responsive genes. This is bZIP transcription factor 11 from Arabidopsis thaliana (Mouse-ear cress).